Reading from the N-terminus, the 227-residue chain is Ribosomal RNA small subunit methyltransferase G (227 aa).

S-adenosyl-L-methionine-binding positions include Gly-81, Leu-86, 131 to 132, and Arg-149; that span reads AE.

This sequence belongs to the methyltransferase superfamily. RNA methyltransferase RsmG family.

Its subcellular location is the cytoplasm. Its function is as follows. Specifically methylates the N7 position of guanine in position 518 of 16S rRNA. In Rhodococcus jostii (strain RHA1), this protein is Ribosomal RNA small subunit methyltransferase G.